Consider the following 863-residue polypeptide: Glycerol-3-phosphate acyltransferase (863 aa).

A disordered region spans residues 1–29 (MPKKNSPLLPKETTTTQSSVDTSGSSNLT). Residues 12-29 (ETTTTQSSVDTSGSSNLT) show a composition bias toward polar residues. An HXXXXD motif motif is present at residues 343–348 (SHRSHM).

The protein belongs to the GPAT/DAPAT family.

It is found in the cell inner membrane. It carries out the reaction sn-glycerol 3-phosphate + an acyl-CoA = a 1-acyl-sn-glycero-3-phosphate + CoA. Its pathway is phospholipid metabolism; CDP-diacylglycerol biosynthesis; CDP-diacylglycerol from sn-glycerol 3-phosphate: step 1/3. This Xylella fastidiosa (strain M23) protein is Glycerol-3-phosphate acyltransferase.